We begin with the raw amino-acid sequence, 534 residues long: Cytokine-like nuclear factor N-PAC (534 aa).

In terms of domain architecture, PWWP spans 8–66; that stretch reads QGDLVWGKLGRYPPWPGKIVNPPKDLKKPRGKKCLFVKFFGTEDHAWIKVEQLKPYHAH. Basic and acidic residues-rich tracts occupy residues 93–122 and 138–157; these read AKAK…QTGE and RSRD…DKDS. The disordered stretch occupies residues 93 to 168; that stretch reads AKAKEHAKEH…SPQPSSLKKL (76 aa). The a.T hook DNA-binding region spans 144-156; the sequence is PRKRGRPPKDDKD. The tract at residues 190–193 is interaction with histone H3; that stretch reads DSWL. The tract at residues 242–534 is dehydrogenase domain; the sequence is GNIIPTDKKI…MSAVYRAYIH (293 aa). NAD(+)-binding positions include 252 to 266, Thr343, and Lys486; that span reads GFLG…IVSN.

It belongs to the HIBADH-related family. NP60 subfamily. As to quaternary structure, homotetramere. Binds to mononucleosomes.

It localises to the nucleus. Its subcellular location is the chromosome. Cytokine-like nuclear factor with chromatin gene reader activity involved in chromatin modification and regulation of gene expression. Acts as a nucleosome-destabilizing factor that is recruited to genes during transcriptional activation. Recognizes and binds histone H3 without a preference for specific epigenetic markers and also binds DNA. Interacts with KDM1B and promotes its histone demethylase activity by facilitating the capture of H3 tails, they form a multifunctional enzyme complex that modifies transcribed chromatin and facilitates Pol II transcription through nucleosomes. This Xenopus tropicalis (Western clawed frog) protein is Cytokine-like nuclear factor N-PAC (glyr1).